Consider the following 340-residue polypeptide: Myomesin-1 (340 aa).

The segment at 177-212 (AEKARLKSRPSAPXTGQIIVTEEEPSEEAGTENXQR) is disordered. A compositionally biased stretch (acidic residues) spans 197–206 (TEEEPSEEAG).

In terms of assembly, homodimer. Interacts with TTN/titin and PNKD. In terms of tissue distribution, seems to be expressed in all cardiac and skeletal fibers.

It localises to the cytoplasm. The protein resides in the myofibril. Its subcellular location is the sarcomere. The protein localises to the m line. Its function is as follows. Major component of the vertebrate myofibrillar M band. Binds myosin, titin, and light meromyosin. This binding is dose dependent. The chain is Myomesin-1 (MYOM1) from Bos taurus (Bovine).